The sequence spans 544 residues: MPSKSSVSGNSVEERIRSELGLSKEVTLIRRNAPAAVLYQDALKEKKTVISSAGALIAYSGEKTGRSPKDKRIVEEETSRDNVWWGPVNKPCSERTWAINRERAADYLRTRETLYVVDAFAGWDPKYRIKVRVVCARAYHALFMTNMLIRPTEEELANFGEPDFTVWNAGQFPANARTQDMTSKTTIEINFKAMEMVILGTEYAGEMKKGIFTVMFYLMPVHHNVLTLHSSCNQGIKNGDVTLFFGLSGTGKTTLSADPHRLLIGDDEHCWSDEGVFNIEGGCYAKCINLSREKEPEIFDAIRFGSVLENVIYDSESHEVDYDDSSITENTRCAYPIDFIPSAKIPCLAPAHPKNIILLTCDASGVLPPVSKLTPEQVMYHFISGYTSKMAGTEQGVTEPEPTFSSCFGQPFLSLHPMRYATMLAEKMHEHSANAWLINTGWTGSSYVSGGKRCALKYTRAILDAIHDGSLAKAEFESLPIFNLQVPKAVEGVPSELLNPARNWSEGEAKYQSAVSKLAGLFVENFKTYQDKATSDVLAAGPQL.

246–253 (GLSGTGKT) is an ATP binding site.

It belongs to the phosphoenolpyruvate carboxykinase (ATP) family.

The catalysed reaction is oxaloacetate + ATP = phosphoenolpyruvate + ADP + CO2. Its pathway is carbohydrate biosynthesis; gluconeogenesis. This Candida glabrata (strain ATCC 2001 / BCRC 20586 / JCM 3761 / NBRC 0622 / NRRL Y-65 / CBS 138) (Yeast) protein is Phosphoenolpyruvate carboxykinase (ATP) (PCK1).